We begin with the raw amino-acid sequence, 120 residues long: UPF0231 protein YacL (120 aa).

This sequence belongs to the UPF0231 family.

In Escherichia coli O6:K15:H31 (strain 536 / UPEC), this protein is UPF0231 protein YacL.